The primary structure comprises 536 residues: MARACPSLAWQLPWALVAGLAQAASLAWPWGGEPLWWLQLASMAMLAWLLRPGADRAVAWHRAALIGGVFATAWLASTFWWLFISMHRYGALPAPLAAAAVLVLAAFLASYYAAAMGLFCRLAPLHRAGAALLFGACWLLAELARGSLWTGFPWGAGGYAHADGPLRVLARYVGVYGIGAVAALLALLCVQWRRADLRHWPMWLLLLAGAAALALAAVQRTCAIDLCDTPPPWRRDPTLSVELLQGNIAQDEKFRPGSGVALALQWYGQALRTARAQLVVAPETALPLLPQQLMPGYLEGLARHYAQGPQAALLGIPWGDQATGYTNSVLGLSPATGAMPYRYDKHHLVPFGEFVPPFFKWFTARMQIPLGNFNRAGVGQASFAWAGQRLAPNICYEDLFGEELGARFIDPAQAPTVFVNLSNIGWFGNTIAIDQHLQISRMRALEFERPMVRATNTGATAIIDHRGQVTHQLARHTRGVLRGQVHGRGLDAHSGWAITPYAWWVARWGLWPLWALAALALAWAMRAQRMRRARGA.

The next 6 membrane-spanning stretches (helical) occupy residues 34-54 (PLWW…RPGA), 64-84 (ALIG…WLFI), 89-109 (YGAL…AFLA), 129-149 (GAAL…GSLW), 172-192 (YVGV…CVQW), and 199-219 (HWPM…AAVQ). One can recognise a CN hydrolase domain in the interval 244–487 (LQGNIAQDEK…RGVLRGQVHG (244 aa)). E283 serves as the catalytic Proton acceptor. K345 is an active-site residue. The Nucleophile role is filled by C395. Residues 503 to 523 (WWVARWGLWPLWALAALALAW) traverse the membrane as a helical segment.

This sequence belongs to the CN hydrolase family. Apolipoprotein N-acyltransferase subfamily.

The protein resides in the cell inner membrane. The enzyme catalyses N-terminal S-1,2-diacyl-sn-glyceryl-L-cysteinyl-[lipoprotein] + a glycerophospholipid = N-acyl-S-1,2-diacyl-sn-glyceryl-L-cysteinyl-[lipoprotein] + a 2-acyl-sn-glycero-3-phospholipid + H(+). The protein operates within protein modification; lipoprotein biosynthesis (N-acyl transfer). Functionally, catalyzes the phospholipid dependent N-acylation of the N-terminal cysteine of apolipoprotein, the last step in lipoprotein maturation. In Verminephrobacter eiseniae (strain EF01-2), this protein is Apolipoprotein N-acyltransferase.